Consider the following 514-residue polypeptide: MQISSSEICELISKKIAKFDIISSMHNEGRVISVSDGIIQIYGLSDVMQGEMLSLPGDKYAIALNLEKNVVGAIVMGEYTHITEGTKIISTGRIFEIPVGSKFLGRVINALGVPIDGKGRIQEEKFLPVEINAPGVIDRQKISEPLQTGYKSIDAMVPIGKGQRELIIGDRQTGKTSLAIDTIINQRNTKIKCIYVAIGQKFSTIVNLVRQLEDNQALNHTIVIVASASESAALQYLVPYSGCSLGEFFRDQGKDALIVYDDLSKHAIAYRQISLLLRRPPGREAFPGDIFYLHARLLERACRVNSNYLKNILGTVNKFSTGSLTALPIIETQDGDVSSFIPTNVISITDGQIFLESNLFNSGIRPAINPGISVSRVGGAAQCQIIRKLSSGIRTSLAQYQELIAFSQFSSELDEITRNQLIHGKKLIEILKQKQYHPMSIAEQAIILFAAENNFLNDVSVEQIIKFEKMLLLFFNTNNSELVLSINNYKRINDVVENQLSDVINAFKLTKCWS.

Residue 169-176 coordinates ATP; it reads GDRQTGKT.

This sequence belongs to the ATPase alpha/beta chains family. In terms of assembly, F-type ATPases have 2 components, CF(1) - the catalytic core - and CF(0) - the membrane proton channel. CF(1) has five subunits: alpha(3), beta(3), gamma(1), delta(1), epsilon(1). CF(0) has three main subunits: a(1), b(2) and c(9-12). The alpha and beta chains form an alternating ring which encloses part of the gamma chain. CF(1) is attached to CF(0) by a central stalk formed by the gamma and epsilon chains, while a peripheral stalk is formed by the delta and b chains.

Its subcellular location is the cell membrane. The enzyme catalyses ATP + H2O + 4 H(+)(in) = ADP + phosphate + 5 H(+)(out). In terms of biological role, produces ATP from ADP in the presence of a proton gradient across the membrane. The alpha chain is a regulatory subunit. In Buchnera aphidicola subsp. Baizongia pistaciae (strain Bp), this protein is ATP synthase subunit alpha.